A 118-amino-acid chain; its full sequence is Light-harvesting protein B-800/850 gamma chain (118 aa).

In terms of biological role, seems to be required for the LH-II stabilization. The chain is Light-harvesting protein B-800/850 gamma chain (pucE) from Rhodobacter capsulatus (Rhodopseudomonas capsulata).